Reading from the N-terminus, the 415-residue chain is Prostacyclin receptor (415 aa).

Residues 1 to 21 form a disordered region; the sequence is MMASDGHPGPPSVTPGSPLSA. At 1–44 the chain is on the extracellular side; that stretch reads MMASDGHPGPPSVTPGSPLSAGGREWQGMAGSCWNITYVQDSVG. Disulfide bonds link cysteine 33-cysteine 193 and cysteine 120-cysteine 198. Asparagine 35 carries an N-linked (GlcNAc...) asparagine glycan. The chain crosses the membrane as a helical span at residues 45 to 66; sequence PATSTLMFVAGVVGNGLALGIL. At 67 to 79 the chain is on the cytoplasmic side; sequence GARRRSHPSAFAV. The chain crosses the membrane as a helical span at residues 80–104; it reads LVTGLAVTDLLGTCFLSPAVFVAYA. Residues 105-122 lie on the Extracellular side of the membrane; the sequence is RNSSLLGLAHGGTMLCDT. A helical membrane pass occupies residues 123–143; that stretch reads FAFAMTFFGLASTLILFAMAV. Topologically, residues 144-162 are cytoplasmic; it reads ERCLALSHPYLYAQLDGPR. Residues 163–186 form a helical membrane-spanning segment; it reads CARFALPSIYAFCCLFCSLPLLGL. Residues 187–215 lie on the Extracellular side of the membrane; sequence GEHQQYCPGSWCFIRMRSAQPGGCAFSLA. A helical transmembrane segment spans residues 216–236; the sequence is YASLMALLVTSIFFCNGSVTL. The Cytoplasmic segment spans residues 237–263; it reads SLYHMYRQQRRHHGSFVPTSRAREDEV. The chain crosses the membrane as a helical span at residues 264 to 288; the sequence is YHLILLALMTVIMAVCSLPLMIRGF. Residues 289–301 lie on the Extracellular side of the membrane; the sequence is TQAIAPDSREMGD. A helical membrane pass occupies residues 302 to 322; it reads LLAFRFNAFNPILDPWVFILF. At 323 to 415 the chain is on the cytoplasmic side; it reads RKAVFQRLKF…SEAIAACSLC (93 aa). Positions 349 to 370 are disordered; the sequence is PLSRPASGRRDPPAPTSLQAKE. The residue at position 365 (serine 365) is a Phosphoserine. Cysteine 412 is subject to Cysteine methyl ester. A lipid anchor (S-farnesyl cysteine) is attached at cysteine 412. A propeptide spans 413 to 415 (removed in mature form); that stretch reads SLC.

Belongs to the G-protein coupled receptor 1 family. Interacts (non-isoprenylated C-terminus) with PDZK1. Isoprenylation does not influence ligand binding but is required for efficient coupling to the effectors adenylyl cyclase and phospholipase C.

It is found in the cell membrane. Its function is as follows. Receptor for prostacyclin (prostaglandin I2 or PGI2). The activity of this receptor is mediated by G(s) proteins which activate adenylate cyclase. In Mus musculus (Mouse), this protein is Prostacyclin receptor (Ptgir).